A 38-amino-acid chain; its full sequence is Photosystem II reaction center protein Y (38 aa).

A helical membrane pass occupies residues 4-22; sequence TIVVFAPIIAALAWVVFNI.

The protein belongs to the PsbY family. PSII is composed of 1 copy each of membrane proteins PsbA, PsbB, PsbC, PsbD, PsbE, PsbF, PsbH, PsbI, PsbJ, PsbK, PsbL, PsbM, PsbT, PsbX, PsbY, Psb30/Ycf12, peripheral proteins PsbO, CyanoQ (PsbQ), PsbU, PsbV and a large number of cofactors. It forms dimeric complexes.

It is found in the cellular thylakoid membrane. In terms of biological role, loosely associated component of the core of photosystem II (PSII), it is not always seen in crystals. PSII is a light-driven water plastoquinone oxidoreductase, using light energy to abstract electrons from H(2)O, generating a proton gradient subsequently used for ATP formation. The sequence is that of Photosystem II reaction center protein Y from Prochlorococcus marinus (strain MIT 9215).